Consider the following 100-residue polypeptide: NADH-quinone oxidoreductase subunit K (100 aa).

The next 3 helical transmembrane spans lie at 4–24, 29–49, and 60–80; these read LSNYLIVSAVLFSIGTIGVLT, IVVFMCIELMLNAVNLTFVAF, and IFVFFIMTVAAAEAAVGLALF.

This sequence belongs to the complex I subunit 4L family. As to quaternary structure, NDH-1 is composed of 14 different subunits. Subunits NuoA, H, J, K, L, M, N constitute the membrane sector of the complex.

It is found in the cell inner membrane. The catalysed reaction is a quinone + NADH + 5 H(+)(in) = a quinol + NAD(+) + 4 H(+)(out). Functionally, NDH-1 shuttles electrons from NADH, via FMN and iron-sulfur (Fe-S) centers, to quinones in the respiratory chain. The immediate electron acceptor for the enzyme in this species is believed to be ubiquinone. Couples the redox reaction to proton translocation (for every two electrons transferred, four hydrogen ions are translocated across the cytoplasmic membrane), and thus conserves the redox energy in a proton gradient. The polypeptide is NADH-quinone oxidoreductase subunit K (Trichlorobacter lovleyi (strain ATCC BAA-1151 / DSM 17278 / SZ) (Geobacter lovleyi)).